The primary structure comprises 633 residues: MINISFPDGSVKQFEKNITAFEIAVVISTSLAKAAMIAEINGDLKDLSTQIDNDCRLRILTAKDPECLEVIRHDAAHLTAEAVKELFPETQVTIGPAIENGYYYDFARDKPFTTDDLAVIEAKMHELAKKNEKVTRELWDREKAVEFFKSIGEHYKAEIIASIPSNEPISLYRQGNFIDLCRGPHAPSTGFVKHFKLMKVAGAYWRGDSRNEVLQRIYGTAWATKEQLESYLFMLEEAEKRDHRKLGKELDLFHFQEEAQGMVFWHDKGWSVYNTIEQYIRRKIRKNGYIEVKTPVLVDKSLWELSGHWEKFRDDMFALETDDKTLALKPMNCPCHVQIFKQGIKSYRDLPLRMSEFGLCHRNEASGALHGLMRVRSLVQDDAHIFCAEEQITDETVSFCKLLTEVYKDFGFTDIKVKFSDRPEVRAGSSETWDKAENALKEAVEKAGYSYTLNPGEGAFYGPKLEFVLTDAIGRQWQCGTLQMDFVLPERLDASYVAASGEKKRPVMLHRAILGSLERFIGILIEEYAGRFPLWLAPVQVAIATITSDLNDYALEVQKALIESGVRVDINISPDKINYKIREFSNQKVPMIAVIGKQEKENKQVTIRRLGTTEQEVLSIEQLIEYIREENSK.

The region spanning 1–61 (MINISFPDGS…DNDCRLRILT (61 aa)) is the TGS domain. Residues 242–533 (DHRKLGKELD…LIEEYAGRFP (292 aa)) form a catalytic region. Cys333, His384, and His510 together coordinate Zn(2+).

It belongs to the class-II aminoacyl-tRNA synthetase family. As to quaternary structure, homodimer. The cofactor is Zn(2+).

It is found in the cytoplasm. It carries out the reaction tRNA(Thr) + L-threonine + ATP = L-threonyl-tRNA(Thr) + AMP + diphosphate + H(+). Catalyzes the attachment of threonine to tRNA(Thr) in a two-step reaction: L-threonine is first activated by ATP to form Thr-AMP and then transferred to the acceptor end of tRNA(Thr). Also edits incorrectly charged L-seryl-tRNA(Thr). This chain is Threonine--tRNA ligase, found in Rickettsia bellii (strain OSU 85-389).